Consider the following 311-residue polypeptide: Malate dehydrogenase (311 aa).

NAD(+) contacts are provided by residues 7–13 (GAAGGIG) and Asp-34. Residues Arg-81 and Arg-87 each contribute to the substrate site. Residues Asn-94 and 117–119 (ITN) each bind NAD(+). Residues Asn-119 and Arg-153 each contribute to the substrate site. His-177 serves as the catalytic Proton acceptor. Residue Met-227 coordinates NAD(+).

Belongs to the LDH/MDH superfamily. MDH type 1 family. Homodimer.

The catalysed reaction is (S)-malate + NAD(+) = oxaloacetate + NADH + H(+). Functionally, catalyzes the reversible oxidation of malate to oxaloacetate. This is Malate dehydrogenase from Shewanella denitrificans (strain OS217 / ATCC BAA-1090 / DSM 15013).